The sequence spans 223 residues: MNKLIPLPREFFARDTNLVSTELIGKVLYFQGTTAIITETESYIGNDDPACHAARGRTKRTDVMFGPAGFSYVYLIYGMYHCLNFVTEDEGFPAATLIRGVYVISHNDLYTIYTAKVKSQITDEKTQSIIISEDRRSTKFDIPNLEESNLYLNGPGKLCKYLGINTTHNKCDLINNKDFFVSDIGLNLPYSTTKRIGITKGTDKLWRYIVTDNKNALLNINIL.

The protein belongs to the DNA glycosylase MPG family.

In Rickettsia typhi (strain ATCC VR-144 / Wilmington), this protein is Putative 3-methyladenine DNA glycosylase.